Reading from the N-terminus, the 152-residue chain is Immunity protein YobK (152 aa).

Interacts with cognate toxin YobL but not with non-cognate putative toxin YeeF. The interaction inhibits the toxic activity of YobL.

Its subcellular location is the cytoplasm. In terms of biological role, immunity component of one of 6 LXG toxin-immunity modules in this strain. They promote kin selection, mediate competition in biofilms, and drive spatial segregation of different strains, indicating that LXG toxins may help avoid warfare between strains in biofilms. Mediates intercellular competition during biofilm formation; disruption of the operon disadvantages the bacteria, but overexpression of the cognate immunity protein restores growth in competition with wild-type. In situ neutralizes the toxic effect of cognate toxin YobL. Neutralizes the toxic activity of cognate toxin YobL upon expression in E.coli. Does not have immunity protein activity on other LXG toxins. In Bacillus subtilis (strain 168), this protein is Immunity protein YobK (yobK).